Consider the following 88-residue polypeptide: U24 protein (88 aa).

At T6 the chain carries Phosphothreonine. The PPXY motif signature appears at 8–11 (PPSY). A helical membrane pass occupies residues 58 to 78 (FAFLVLTGLAIAMILFIAFVI).

In terms of assembly, interacts with host ITCH; this interaction probably mediates ITCH degradation. Interacts probably with NEDD4.

The protein localises to the membrane. In terms of biological role, down-regulates the TCR/CD3E complex and the transferrin receptor TFRC in host T-cells by blocking them from recycling back to the cell surface. The protein is U24 protein (U24) of Human herpesvirus 6B (strain Z29) (HHV-6 variant B).